Consider the following 607-residue polypeptide: UvrABC system protein C (607 aa).

One can recognise a GIY-YIG domain in the interval E15 to V94. Residues D204 to V239 form the UVR domain.

This sequence belongs to the UvrC family. In terms of assembly, interacts with UvrB in an incision complex.

The protein resides in the cytoplasm. In terms of biological role, the UvrABC repair system catalyzes the recognition and processing of DNA lesions. UvrC both incises the 5' and 3' sides of the lesion. The N-terminal half is responsible for the 3' incision and the C-terminal half is responsible for the 5' incision. The polypeptide is UvrABC system protein C (Dehalococcoides mccartyi (strain ATCC BAA-2100 / JCM 16839 / KCTC 5957 / BAV1)).